The sequence spans 240 residues: Chromatin structure-remodeling complex protein BSH (240 aa).

The protein belongs to the SNF5 family. As to quaternary structure, interacts with SWI3A and SWI3B, but not with BRM. Expressed in roots, stems, leaves, flowers and siliques.

Its subcellular location is the nucleus. In terms of biological role, component of a multiprotein complex equivalent of the yeast SWI/SNF complex, an ATP-dependent chromatin-remodeling complex, which is required for the positive and negative regulation of gene expression of a large number of genes. It changes chromatin structure by altering DNA-histone contacts within a nucleosome, leading eventually to a change in nucleosome position, thus facilitating or repressing binding of gene-specific transcription factors. This Arabidopsis thaliana (Mouse-ear cress) protein is Chromatin structure-remodeling complex protein BSH (BSH).